A 445-amino-acid chain; its full sequence is tRNA(Ile)-lysidine synthase (445 aa).

ATP is bound at residue 33-38; it reads SGGLDS.

The protein belongs to the tRNA(Ile)-lysidine synthase family.

It is found in the cytoplasm. It carries out the reaction cytidine(34) in tRNA(Ile2) + L-lysine + ATP = lysidine(34) in tRNA(Ile2) + AMP + diphosphate + H(+). Ligates lysine onto the cytidine present at position 34 of the AUA codon-specific tRNA(Ile) that contains the anticodon CAU, in an ATP-dependent manner. Cytidine is converted to lysidine, thus changing the amino acid specificity of the tRNA from methionine to isoleucine. The chain is tRNA(Ile)-lysidine synthase from Pseudomonas syringae pv. tomato (strain ATCC BAA-871 / DC3000).